Here is a 316-residue protein sequence, read N- to C-terminus: CD276 antigen (316 aa).

Positions 1–28 (MLRGWGGPSVGVCVRTALGVLCLCLTGA) are cleaved as a signal peptide. One can recognise an Ig-like V-type domain in the interval 29–139 (VEVQVSEDPV…DSAAVSLQVA (111 aa)). At 29–248 (VEVQVSEDPV…GQPLTFPPEA (220 aa)) the chain is on the extracellular side. 3 N-linked (GlcNAc...) asparagine glycosylation sites follow: Asn-104, Asn-189, and Asn-215. Positions 145–238 (PSMTLEPNKD…QDAHGSVTIT (94 aa)) constitute an Ig-like C2-type domain. A disulfide bridge links Cys-165 with Cys-220. A helical membrane pass occupies residues 249–269 (LWVTVGLSVCLVVLLVALAFV). Topologically, residues 270–316 (CWRKIKQSCEEENAGAEDQDGDGEGSKTALRPLKPSENKEDDGQEIA) are cytoplasmic. A compositionally biased stretch (acidic residues) spans 280-292 (EENAGAEDQDGDG). The interval 280–316 (EENAGAEDQDGDGEGSKTALRPLKPSENKEDDGQEIA) is disordered.

It belongs to the immunoglobulin superfamily. BTN/MOG family. As to quaternary structure, interacts with TREML2 and this interaction enhances T-cell activation. In terms of tissue distribution, ubiquitous.

It localises to the membrane. Functionally, modulates T-cell-mediated immune responses and the development of acute and chronic transplant rejection. Plays a positive regulatory role in bone formation and has a dual role in the bone-immune interface. Induces antitumor immunity as it activates both acquired and innate immunity leading to natural killer cell and CD8 T-cell dependent killing of tumor cells. The sequence is that of CD276 antigen (Cd276) from Mus musculus (Mouse).